A 527-amino-acid chain; its full sequence is Tyrosine-protein kinase TXK (527 aa).

A disordered region spans residues 58–81 (TQSNRGGVQPSKRKPLPPLPQEPP). An SH3 domain is found at 82–142 (DERIQVKALY…PSNYVTENRL (61 aa)). Y91 carries the phosphotyrosine; by autocatalysis modification. The SH2 domain occupies 150 to 246 (WYHKNITRNQ…GLISRLRYPI (97 aa)). The 257-residue stretch at 271-527 (LAFVKEIGSG…QVLTEIAETW (257 aa)) folds into the Protein kinase domain. ATP-binding positions include 277-285 (IGSGQFGVV) and K299. Catalysis depends on D390, which acts as the Proton acceptor. Residue Y420 is modified to Phosphotyrosine; by FYN and autocatalysis.

This sequence belongs to the protein kinase superfamily. Tyr protein kinase family. TEC subfamily. Interacts with PARP1 and EEF1A1. Interacts with SH2D2A. Interacts with FYN. Phosphorylated at Tyr-420 by FYN. Autophosphorylation at Tyr-91 is critical for the activation of TXK, leading to the up-regulation of IFN-gamma gene transcription. In terms of processing, the cysteine string at the N-terminus is palmitoylated and required for the proper subcellular location. In terms of tissue distribution, expressed in early thymocytes, T-cells and mast cells.

The protein localises to the cytoplasm. It localises to the nucleus. Its subcellular location is the cell membrane. It catalyses the reaction L-tyrosyl-[protein] + ATP = O-phospho-L-tyrosyl-[protein] + ADP + H(+). Activated by phosphorylation by FYN. Its function is as follows. Non-receptor tyrosine kinase that plays a redundant role with ITK in regulation of the adaptive immune response. Regulates the development, function and differentiation of conventional T-cells and nonconventional NKT-cells. When antigen presenting cells (APC) activate T-cell receptor (TCR), a series of phosphorylation leads to the recruitment of TXK to the cell membrane, where it is phosphorylated at Tyr-420. Phosphorylation leads to TXK full activation. Also contributes to signaling from many receptors and participates in multiple downstream pathways, including regulation of the actin cytoskeleton. Like ITK, can phosphorylate PLCG1, leading to its localization in lipid rafts and activation, followed by subsequent cleavage of its substrates. In turn, the endoplasmic reticulum releases calcium in the cytoplasm and the nuclear activator of activated T-cells (NFAT) translocates into the nucleus to perform its transcriptional duty. Plays a role in the positive regulation of IFNG transcription in T-helper 1 cells as part of an IFNG promoter-binding complex with PARP1 and EEF1A1. Within the complex, phosphorylates both PARP1 and EEF1A1. Also phosphorylates key sites in LCP2 leading to the up-regulation of Th1 preferred cytokine IL-2. Phosphorylates 'Tyr-201' of CTLA4 which leads to the association of PI-3 kinase with the CTLA4 receptor. The chain is Tyrosine-protein kinase TXK (Txk) from Mus musculus (Mouse).